The chain runs to 279 residues: Tryptophan synthase alpha chain (279 aa).

Active-site proton acceptor residues include E50 and D61.

It belongs to the TrpA family. As to quaternary structure, tetramer of two alpha and two beta chains.

The catalysed reaction is (1S,2R)-1-C-(indol-3-yl)glycerol 3-phosphate + L-serine = D-glyceraldehyde 3-phosphate + L-tryptophan + H2O. The protein operates within amino-acid biosynthesis; L-tryptophan biosynthesis; L-tryptophan from chorismate: step 5/5. The alpha subunit is responsible for the aldol cleavage of indoleglycerol phosphate to indole and glyceraldehyde 3-phosphate. The sequence is that of Tryptophan synthase alpha chain from Sinorhizobium fredii (strain NBRC 101917 / NGR234).